Consider the following 591-residue polypeptide: MPGGTPRLEGHPFSKTGPDPATPGAATMPDSPADVKTQPRSTPPNMPPPPPAVTQGATRHPSFTPSTMMNGSSHSPTAINGAPSTPNGFSNGPATSSSASLSTHQLPPACGARQLSKLKRFLTTLQQFGNDISPEIGERVRTLVLGLVNSTLTIEEFHAKLQEATNFPLRPFVIPFLKANLPLLQRELLHCARMAKQSPAQYLAQHEQLLLDANASSPIDSSELLLEVSESGKRRTPDRTKENGLDRDPLHPEHLSKRPCTMSPAQRYSPSNGLSHPPNGLPHPPGPPPQHYRLEDMAMAHHYRDAYRHADPRERPRPAVHGARQEEVIDHRLTDREWAEEWKHLNNLLNCIMDMVEKTRRSLTVLRRCQEADREELNHWIRRYSDAEDMKKGSPPSARPHNSSSSSEAPQLDVHRDFAPRPLSGYMPEEIWRKAEEAVNEVKRQAMSELQKAVSDAERKAHELITTERAKMERALAEAKRQASEDALTVINQQEDSSESCWNCGRKASETCSGCNTARYCGSFCQHKDWEKHHHVCGQTLQGLPAPSVPTAVGQPEAVPPMASSPSDAGSAGASRAGTPGTPAPLESASR.

Residues Met1–Gln105 form a disordered region. The interval Met1–Ile381 is mediates localization to the nucleus. A compositionally biased stretch (pro residues) spans Ser41 to Ala52. Residues Gln55–Gln105 are compositionally biased toward polar residues. The region spanning Ala112–Glu207 is the TAFH domain. Disordered regions lie at residues Leu226–His291 and Asp386–Pro420. A compositionally biased stretch (basic and acidic residues) spans Glu230–Ser256. Polar residues predominate over residues Ser263–Leu274. Over residues Asn279–Gln290 the composition is skewed to pro residues. Residues Ser394–Pro410 show a composition bias toward low complexity. The stretch at Arg433–Leu488 forms a coiled coil. Zn(2+) is bound by residues Cys501, Cys504, Cys512, Cys515, Cys521, Cys525, His533, and Cys537. Residues Cys501–Cys537 form an MYND-type zinc finger. The disordered stretch occupies residues Ser548–Arg591. Positions Pro560–Pro585 are enriched in low complexity.

The protein belongs to the CBFA2T family.

The protein resides in the nucleus. It localises to the nucleolus. It is found in the nucleoplasm. Its subcellular location is the golgi apparatus. Functionally, functions as a transcriptional repressor. Regulates the proliferation and the differentiation of erythroid progenitors. Plays a role in granulocyte differentiation. May also function as an A-kinase-anchoring protein. The sequence is that of Protein CBFA2T3 (CBFA2T3) from Gallus gallus (Chicken).